Here is a 278-residue protein sequence, read N- to C-terminus: Putative protein-disulfide oxidoreductase RF_0032 (278 aa).

The N-terminal stretch at Met-1–Ser-18 is a signal peptide. The disordered stretch occupies residues Val-62 to Pro-84. The span at Asn-65–Gln-81 shows a compositional bias: polar residues. One can recognise a Thioredoxin domain in the interval Pro-77 to Glu-266. A disulfide bridge connects residues Cys-119 and Cys-122.

It belongs to the thioredoxin family. DsbA subfamily.

It localises to the periplasm. Functionally, may be required for disulfide bond formation in some proteins. This is Putative protein-disulfide oxidoreductase RF_0032 from Rickettsia felis (strain ATCC VR-1525 / URRWXCal2) (Rickettsia azadi).